The primary structure comprises 118 residues: Basic phospholipase A2 nigroxin B (118 aa).

Disulfide bonds link Cys-11-Cys-70, Cys-25-Cys-117, Cys-27-Cys-43, Cys-42-Cys-98, Cys-49-Cys-91, Cys-59-Cys-84, and Cys-77-Cys-89. Residues Tyr-26, Gly-28, and Gly-30 each contribute to the Ca(2+) site. Residue His-46 is part of the active site. Asp-47 is a binding site for Ca(2+). Residue Asp-92 is part of the active site.

Belongs to the phospholipase A2 family. Group I subfamily. D49 sub-subfamily. It depends on Ca(2+) as a cofactor. Expressed by the venom gland.

Its subcellular location is the secreted. It catalyses the reaction a 1,2-diacyl-sn-glycero-3-phosphocholine + H2O = a 1-acyl-sn-glycero-3-phosphocholine + a fatty acid + H(+). Functionally, snake venom phospholipase A2 (PLA2) that has only a weak enzymatic activity. It has a myotoxic activity in vivo (dystrophic effect). PLA2 catalyzes the calcium-dependent hydrolysis of the 2-acyl groups in 3-sn-phosphoglycerides. In Micrurus nigrocinctus (Central American coral snake), this protein is Basic phospholipase A2 nigroxin B.